We begin with the raw amino-acid sequence, 446 residues long: Tol-Pal system protein TolB (446 aa).

Positions M1–A19 are cleaved as a signal peptide.

Belongs to the TolB family. The Tol-Pal system is composed of five core proteins: the inner membrane proteins TolA, TolQ and TolR, the periplasmic protein TolB and the outer membrane protein Pal. They form a network linking the inner and outer membranes and the peptidoglycan layer.

It is found in the periplasm. Part of the Tol-Pal system, which plays a role in outer membrane invagination during cell division and is important for maintaining outer membrane integrity. This is Tol-Pal system protein TolB from Pelagibacter ubique (strain HTCC1062).